A 182-amino-acid chain; its full sequence is Adenine phosphoribosyltransferase (182 aa).

Belongs to the purine/pyrimidine phosphoribosyltransferase family. In terms of assembly, homodimer.

It is found in the cytoplasm. The catalysed reaction is AMP + diphosphate = 5-phospho-alpha-D-ribose 1-diphosphate + adenine. The protein operates within purine metabolism; AMP biosynthesis via salvage pathway; AMP from adenine: step 1/1. In terms of biological role, catalyzes a salvage reaction resulting in the formation of AMP, that is energically less costly than de novo synthesis. This is Adenine phosphoribosyltransferase from Bordetella pertussis (strain Tohama I / ATCC BAA-589 / NCTC 13251).